A 275-amino-acid polypeptide reads, in one-letter code: Mitochondrial fission factor homolog A (275 aa).

Residues 1-255 (MAEVNRIHYE…ENKERAKREM (255 aa)) lie on the Cytoplasmic side of the membrane. The disordered stretch occupies residues 100–171 (DFLEPEPAAN…PLISPEDSQN (72 aa)). Basic and acidic residues predominate over residues 114-130 (PREEMKSHFRSRREQCR). The span at 131–142 (SENSTMRRNGQI) shows a compositional bias: polar residues. A coiled-coil region spans residues 223 to 253 (LTDAASLRRQIIKLNRRLQLLEHENKERAKR). The helical; Anchor for type IV membrane protein transmembrane segment at 256–273 (VMYSLTVAFWLVNSWIWL) threads the bilayer. At 274–275 (RR) the chain is on the extracellular side.

Belongs to the Tango11 family.

The protein localises to the mitochondrion outer membrane. It is found in the peroxisome. Its function is as follows. Plays a role in mitochondrial and peroxisomal fission. Promotes the recruitment and association of the fission mediator dynamin-related protein 1 (DNM1L) to the mitochondrial surface. In Danio rerio (Zebrafish), this protein is Mitochondrial fission factor homolog A.